Consider the following 384-residue polypeptide: Anhydro-N-acetylmuramic acid kinase (384 aa).

12-19 (GTSLDGVD) contacts ATP.

It belongs to the anhydro-N-acetylmuramic acid kinase family.

The catalysed reaction is 1,6-anhydro-N-acetyl-beta-muramate + ATP + H2O = N-acetyl-D-muramate 6-phosphate + ADP + H(+). It functions in the pathway amino-sugar metabolism; 1,6-anhydro-N-acetylmuramate degradation. It participates in cell wall biogenesis; peptidoglycan recycling. Its function is as follows. Catalyzes the specific phosphorylation of 1,6-anhydro-N-acetylmuramic acid (anhMurNAc) with the simultaneous cleavage of the 1,6-anhydro ring, generating MurNAc-6-P. Is required for the utilization of anhMurNAc either imported from the medium or derived from its own cell wall murein, and thus plays a role in cell wall recycling. This Cronobacter sakazakii (strain ATCC BAA-894) (Enterobacter sakazakii) protein is Anhydro-N-acetylmuramic acid kinase.